The sequence spans 515 residues: 2-isopropylmalate synthase (515 aa).

The Pyruvate carboxyltransferase domain occupies 4–266; that stretch reads INIFDTTLRD…ETRLNLQEIK (263 aa). Mn(2+) is bound by residues Asp-13, His-201, His-203, and Asn-237. A regulatory domain region spans residues 391–515; the sequence is QLSSLQVQYG…RAENQKVAMQ (125 aa).

Belongs to the alpha-IPM synthase/homocitrate synthase family. LeuA type 1 subfamily. In terms of assembly, homodimer. Mn(2+) serves as cofactor.

It localises to the cytoplasm. The enzyme catalyses 3-methyl-2-oxobutanoate + acetyl-CoA + H2O = (2S)-2-isopropylmalate + CoA + H(+). The protein operates within amino-acid biosynthesis; L-leucine biosynthesis; L-leucine from 3-methyl-2-oxobutanoate: step 1/4. Catalyzes the condensation of the acetyl group of acetyl-CoA with 3-methyl-2-oxobutanoate (2-ketoisovalerate) to form 3-carboxy-3-hydroxy-4-methylpentanoate (2-isopropylmalate). The sequence is that of 2-isopropylmalate synthase from Geobacillus sp. (strain WCH70).